Here is a 555-residue protein sequence, read N- to C-terminus: Formate--tetrahydrofolate ligase (555 aa).

An ATP-binding site is contributed by 64-71; it reads TKAGIGKT.

The protein belongs to the formate--tetrahydrofolate ligase family.

It catalyses the reaction (6S)-5,6,7,8-tetrahydrofolate + formate + ATP = (6R)-10-formyltetrahydrofolate + ADP + phosphate. It participates in one-carbon metabolism; tetrahydrofolate interconversion. The sequence is that of Formate--tetrahydrofolate ligase from Bacteroides thetaiotaomicron (strain ATCC 29148 / DSM 2079 / JCM 5827 / CCUG 10774 / NCTC 10582 / VPI-5482 / E50).